A 429-amino-acid chain; its full sequence is Histidine--tRNA ligase (429 aa).

Belongs to the class-II aminoacyl-tRNA synthetase family. As to quaternary structure, homodimer.

It is found in the cytoplasm. It catalyses the reaction tRNA(His) + L-histidine + ATP = L-histidyl-tRNA(His) + AMP + diphosphate + H(+). This Streptococcus pneumoniae serotype 19F (strain G54) protein is Histidine--tRNA ligase.